Consider the following 217-residue polypeptide: MRLLPKMGGVISIWLTSTLLAMKYLTPLNLAIALLSLLSVNPLMYMKKDFSLVFPILLSALAAYILYLNPTTIYFLLAYSILFIALKFVNEWRIETKIGAFALTFPFPMMALAYGAGLMEILAPLTLLFSLTAFNLFLADSRIYGRVSAKNYLAIIPLALIFYILSHPVLAAAVTAAAIVVTVKANSISVRSFGFSLLFLNLLFVVGFLALDFAGLL.

6 helical membrane-spanning segments follow: residues 13 to 35 (IWLT…IALL), 50 to 68 (FSLV…ILYL), 75 to 94 (FLLA…EWRI), 109 to 131 (MMAL…LFSL), 152 to 174 (YLAI…AAAV), and 194 to 216 (GFSL…FAGL).

The protein resides in the cell membrane. This is an uncharacterized protein from Archaeoglobus fulgidus (strain ATCC 49558 / DSM 4304 / JCM 9628 / NBRC 100126 / VC-16).